Here is a 476-residue protein sequence, read N- to C-terminus: MTEVVHLHMPEEARATQSRDATPRERRYYVWTVGCQMNVSDSERLEAALQGVGYAPAERPEDASFIVLNSCSVRASAEERILGKLSEVQRLKRKHPDTKVVLWGCMVGPGNQSIFQSRLPMVDHFVSPSAVDEVLALAPNPIYQLEEPALPVARWDHPPVSVHVPIQYGCNMSCSFCVIPLRRGRERSRPLDEIVEECRRIVARGAKEITLLGQIVDSWGHDLPGRPDLADLLRAVHDIPGLLRLRFLTSHPAWMTDRLIAAVAELPRCMPDINLPVQAGDDALLKIMRRGYTVQRYRDLIAKIRDAIPDVSLTTDVIVGHPGETRERFEGTKRLLEDIRFDKVHIAAFSSRPGTRAADMELDPTLAVPEGEKQLRRIELERLQEQIAAERNARFLHQTVEVLVEGEHKGKWRGRTPGNKLVFFSDPDDWTGRLARVIITHTGPWSLQGVLARSDETFARVNGALHAVAAANGAAV.

Residues 1–14 show a composition bias toward basic and acidic residues; sequence MTEVVHLHMPEEAR. The interval 1–20 is disordered; sequence MTEVVHLHMPEEARATQSRD. An MTTase N-terminal domain is found at 26-147; sequence RRYYVWTVGC…APNPIYQLEE (122 aa). Residues C35, C71, C105, C170, C174, and C177 each coordinate [4Fe-4S] cluster. The region spanning 156 to 390 is the Radical SAM core domain; the sequence is DHPPVSVHVP…ERLQEQIAAE (235 aa). Positions 393–453 constitute a TRAM domain; it reads ARFLHQTVEV…PWSLQGVLAR (61 aa).

Belongs to the methylthiotransferase family. MiaB subfamily. Monomer. Requires [4Fe-4S] cluster as cofactor.

Its subcellular location is the cytoplasm. The catalysed reaction is N(6)-dimethylallyladenosine(37) in tRNA + (sulfur carrier)-SH + AH2 + 2 S-adenosyl-L-methionine = 2-methylsulfanyl-N(6)-dimethylallyladenosine(37) in tRNA + (sulfur carrier)-H + 5'-deoxyadenosine + L-methionine + A + S-adenosyl-L-homocysteine + 2 H(+). Functionally, catalyzes the methylthiolation of N6-(dimethylallyl)adenosine (i(6)A), leading to the formation of 2-methylthio-N6-(dimethylallyl)adenosine (ms(2)i(6)A) at position 37 in tRNAs that read codons beginning with uridine. The protein is tRNA-2-methylthio-N(6)-dimethylallyladenosine synthase of Roseiflexus sp. (strain RS-1).